The primary structure comprises 301 residues: Heterogeneous nuclear ribonucleoprotein D-like (301 aa).

The disordered stretch occupies residues 1-29 (MEDATEMSGGAEEFAEGSKINASKNQQDD). RRM domains lie at 30-112 (GKMF…KGKE) and 115-194 (KKVF…QPKE). Disordered stretches follow at residues 194 to 230 (EVYR…NWNQ) and 269 to 301 (GYGP…YQPY). Residues 212-224 (GGRGGGRGRGRGQ) are compositionally biased toward gly residues.

It is found in the nucleus. The protein localises to the cytoplasm. Acts as a transcriptional regulator. Binds DNA and RNA. The polypeptide is Heterogeneous nuclear ribonucleoprotein D-like (HNRNPDL) (Gallus gallus (Chicken)).